A 62-amino-acid polypeptide reads, in one-letter code: uncharacterized protein (62 aa).

This is an uncharacterized protein from Schizosaccharomyces pombe (strain 972 / ATCC 24843) (Fission yeast).